The chain runs to 96 residues: MPSSNGPMTGTRDKLSNSPRERGMSPPQRAIQEYDEGQKVHLRIDPSVREGRFHPRFNGHTGEVTGKQGRAFKIKIIDGGKEKTLIARPAHLRAQE.

The segment at 1-37 (MPSSNGPMTGTRDKLSNSPRERGMSPPQRAIQEYDEG) is disordered. Basic and acidic residues predominate over residues 11-23 (TRDKLSNSPRERG).

This sequence belongs to the eukaryotic ribosomal protein eL21 family.

In Haloquadratum walsbyi (strain DSM 16790 / HBSQ001), this protein is Large ribosomal subunit protein eL21.